The chain runs to 285 residues: Protease HtpX homolog (285 aa).

2 helical membrane passes run 7–27 (TAML…MIGG) and 30–50 (GMTI…WFSD). Histidine 131 is a binding site for Zn(2+). Glutamate 132 is a catalytic residue. Histidine 135 contributes to the Zn(2+) binding site. 2 helical membrane-spanning segments follow: residues 146 to 166 (ISAT…FFGG) and 177 to 197 (IAGI…QMAI). Glutamate 202 provides a ligand contact to Zn(2+).

Belongs to the peptidase M48B family. Zn(2+) is required as a cofactor.

The protein localises to the cell inner membrane. The protein is Protease HtpX homolog of Burkholderia thailandensis (strain ATCC 700388 / DSM 13276 / CCUG 48851 / CIP 106301 / E264).